Consider the following 70-residue polypeptide: Large ribosomal subunit protein eL38 (70 aa).

Residue lysine 4 forms a Glycyl lysine isopeptide (Lys-Gly) (interchain with G-Cter in SUMO2) linkage. Lysine 9 is subject to N6-acetyllysine; alternate. A Glycyl lysine isopeptide (Lys-Gly) (interchain with G-Cter in SUMO2); alternate cross-link involves residue lysine 9. N6-acetyllysine is present on lysine 67.

The protein belongs to the eukaryotic ribosomal protein eL38 family. As to quaternary structure, component of the large ribosomal subunit.

It is found in the cytoplasm. Component of the large ribosomal subunit. The ribosome is a large ribonucleoprotein complex responsible for the synthesis of proteins in the cell. The chain is Large ribosomal subunit protein eL38 (RPL38) from Macaca fascicularis (Crab-eating macaque).